The following is a 424-amino-acid chain: Serine--tRNA ligase (424 aa).

231 to 233 contributes to the L-serine binding site; the sequence is TAE. 261–263 is a binding site for ATP; sequence RSE. Glu284 is a binding site for L-serine. 348-351 is a binding site for ATP; the sequence is ETSS. Ser383 is a binding site for L-serine.

It belongs to the class-II aminoacyl-tRNA synthetase family. Type-1 seryl-tRNA synthetase subfamily. As to quaternary structure, homodimer. The tRNA molecule binds across the dimer.

It is found in the cytoplasm. It catalyses the reaction tRNA(Ser) + L-serine + ATP = L-seryl-tRNA(Ser) + AMP + diphosphate + H(+). The enzyme catalyses tRNA(Sec) + L-serine + ATP = L-seryl-tRNA(Sec) + AMP + diphosphate + H(+). It functions in the pathway aminoacyl-tRNA biosynthesis; selenocysteinyl-tRNA(Sec) biosynthesis; L-seryl-tRNA(Sec) from L-serine and tRNA(Sec): step 1/1. Its function is as follows. Catalyzes the attachment of serine to tRNA(Ser). Is also able to aminoacylate tRNA(Sec) with serine, to form the misacylated tRNA L-seryl-tRNA(Sec), which will be further converted into selenocysteinyl-tRNA(Sec). The polypeptide is Serine--tRNA ligase (Metamycoplasma arthritidis (strain 158L3-1) (Mycoplasma arthritidis)).